The sequence spans 434 residues: Serine/threonine-protein kinase Sgk1-B (434 aa).

The disordered stretch occupies residues 68–94 (ESELLNENSSPPPSHSQQINLGPSSNP). The 258-residue stretch at 101–358 (FQFLKIIGKG…FMEIKNHIFF (258 aa)) folds into the Protein kinase domain. ATP is bound by residues 107 to 115 (IGKGSFGKV) and Lys130. Asp225 serves as the catalytic Proton acceptor. Positions 359–434 (SPIDWDDLIN…SYAPPMDSYL (76 aa)) constitute an AGC-kinase C-terminal domain.

The protein belongs to the protein kinase superfamily. AGC Ser/Thr protein kinase family.

It is found in the cytoplasm. Its subcellular location is the nucleus. It localises to the endoplasmic reticulum. It carries out the reaction L-seryl-[protein] + ATP = O-phospho-L-seryl-[protein] + ADP + H(+). It catalyses the reaction L-threonyl-[protein] + ATP = O-phospho-L-threonyl-[protein] + ADP + H(+). Protein kinase that may play an important role in cellular stress response. Plays an important role in activating certain potassium, sodium, and chloride channels, suggesting an involvement in the regulation of processes such as cell survival, neuronal excitability and renal sodium excretion. The protein is Serine/threonine-protein kinase Sgk1-B (sgk1-b) of Xenopus laevis (African clawed frog).